The following is a 573-amino-acid chain: DNA ligase (573 aa).

Glu-250 lines the ATP pocket. Residue Lys-252 is the N6-AMP-lysine intermediate of the active site. ATP contacts are provided by Arg-257, Arg-272, Glu-301, Phe-342, Arg-432, and Lys-438.

This sequence belongs to the ATP-dependent DNA ligase family. Requires Mg(2+) as cofactor.

The enzyme catalyses ATP + (deoxyribonucleotide)n-3'-hydroxyl + 5'-phospho-(deoxyribonucleotide)m = (deoxyribonucleotide)n+m + AMP + diphosphate.. Functionally, DNA ligase that seals nicks in double-stranded DNA during DNA replication, DNA recombination and DNA repair. The sequence is that of DNA ligase from Methanococcus maripaludis (strain DSM 14266 / JCM 13030 / NBRC 101832 / S2 / LL).